The sequence spans 14507 residues: Mucin-16 (14507 aa).

Positions 1–17 (MLKPSGLPGSSSPTRSL) are enriched in low complexity. Residues 1–138 (MLKPSGLPGS…PRTRTSSTEG (138 aa)) are disordered. Residues 1 to 14451 (MLKPSGLPGS…EPLTGNSDLP (14451 aa)) are Extracellular-facing. Composition is skewed to polar residues over residues 35–46 (TGATLSPKTSTG) and 56–138 (PFTS…STEG). Asn-139 carries an N-linked (GlcNAc...) asparagine glycan. Disordered stretches follow at residues 160 to 180 (EKYTVPTETSTTEGDSTETPW), 198 to 229 (DSTASKENAPVSMTPAETTVTDSHTPGRTNPS), 265 to 287 (FSSPEPGSAGHSRISTSAPLSSS), 396 to 554 (LGGT…STSV), 655 to 674 (VSKTAAGSSPPGGTKPSYTM), 695 to 719 (SLGLTPLNTRHPFSSPEPDSAGHTK), and 740 to 888 (TSTF…RTTL). Over residues 166-178 (TETSTTEGDSTET) the composition is skewed to low complexity. Residues 212–229 (PAETTVTDSHTPGRTNPS) are compositionally biased toward polar residues. 2 stretches are compositionally biased toward low complexity: residues 276–287 (SRISTSAPLSSS) and 396–413 (LGGTSTSALTTTSPSTTL). 3 stretches are compositionally biased toward polar residues: residues 414–423 (VSEETNTHHS), 431–441 (GTLNTSMTPLE), and 460–478 (GFTTLDSKIRSPSQVSSSH). An N-linked (GlcNAc...) asparagine glycan is attached at Asn-434. Low complexity-rich tracts occupy residues 485–497 (TTGSTSGRQSSST) and 508–525 (ATTSSTSKASSWTSESTA). The span at 526–543 (QQFSEPQHTQWVETSPSM) shows a compositional bias: polar residues. Polar residues-rich tracts occupy residues 696-706 (LGLTPLNTRHP), 740-780 (TSTF…NAAT), 787-796 (NATSPLTHPS), and 805-821 (SVLTLSTSAETTDSPNI). An N-linked (GlcNAc...) asparagine glycan is attached at Asn-787. A compositionally biased stretch (low complexity) spans 823-846 (PTGTLTSESSESPSTLSLPSVSGV). Polar residues-rich tracts occupy residues 847-860 (KTTFSSSTPSTHLF) and 869-888 (TSNPSVSQPETSVSRVRTTL). Residues Asn-930 and Asn-957 are each glycosylated (N-linked (GlcNAc...) asparagine). Composition is skewed to polar residues over residues 949–969 (SQTNRDTFNDSAAPQSTTWPE), 1092–1101 (GSSTPGRTSQ), 1124–1137 (GTSSALTPQMTATH), and 1301–1317 (SGSSPEMTAPGETNTGS). 6 disordered regions span residues 949–981 (SQTNRDTFNDSAAPQSTTWPETSPRFKTGLPSA), 1082–1101 (VSPSQSMDAAGSSTPGRTSQ), 1121–1149 (PRDGTSSALTPQMTATHPPSPDPGSARST), 1301–1378 (SGSS…NLTS), 1593–1641 (LGTQ…SSSS), and 1704–1757 (LSES…SPTT). The span at 1318–1328 (TWDPTTYITTT) shows a compositional bias: low complexity. Polar residues-rich tracts occupy residues 1334–1347 (SSAQVSTPHSVRTL), 1368–1378 (PKISSSPNLTS), 1596–1613 (QGRSSSEATTFWKPSTDT), 1621–1633 (GPTNIQSTPPMDN), and 1704–1745 (LSES…GSQM). N-linked (GlcNAc...) asparagine glycosylation occurs at Asn-1375. Residue Asn-1633 is glycosylated (N-linked (GlcNAc...) asparagine). A compositionally biased stretch (low complexity) spans 1746 to 1757 (STSIPLTSSPTT). 3 N-linked (GlcNAc...) asparagine glycosylation sites follow: Asn-1840, Asn-1877, and Asn-1890. The span at 1846–1908 (DLSHGVHTSS…TEKSEVSSSI (63 aa)) shows a compositional bias: polar residues. Disordered stretches follow at residues 1846 to 1930 (DLSH…PGNR), 2010 to 2033 (VSASPTHENSVSSGSSTSSPYSSA), 2064 to 2140 (WPST…GASI), and 2153 to 2177 (RSDVSGLTSESTANPSLGTASSAGT). Composition is skewed to low complexity over residues 2019-2033 (SVSSGSSTSSPYSSA) and 2064-2085 (WPSTSLSEALSSGHSGVSNPSS). The span at 2111–2132 (HGPQNTAASTLNTDASSVTGLS) shows a compositional bias: polar residues. Asn-2345 and Asn-2375 each carry an N-linked (GlcNAc...) asparagine glycan. Disordered stretches follow at residues 2393–2455 (PTSI…PFTI) and 2566–2591 (SESKAIHSSPQTPTTPTSGANWETSA). Low complexity-rich tracts occupy residues 2417-2429 (TSTTETNTATSPS) and 2566-2583 (SESKAIHSSPQTPTTPTS). N-linked (GlcNAc...) asparagine glycosylation is present at Asn-2737. Disordered regions lie at residues 2789-2822 (TTGSQGMASSGGIRSGSTHSTGTKTFSSLPLTMN), 2838-2885 (TATQ…TWGI), 2901-3006 (DTKS…AMTS), 3019-3052 (TGQAARSGSSSSPISLSTEKETSFLSPTASTSRK), 3083-3148 (TLNM…ASSI), 3172-3235 (SQAA…PETT), 3251-3276 (ALGSGSTSISHLPTGTTSPTKSPTEN), 3299-3392 (GTPG…KTET), 3415-3436 (TSRSVDEAYSSTSSWSDQTSGS), and 3462-3491 (VSLPSGDQGITSLTNPSGGKTSSASSVTSP). The span at 2803–2819 (SGSTHSTGTKTFSSLPL) shows a compositional bias: polar residues. Over residues 2864–2875 (SASSSPSKAFAS) the composition is skewed to low complexity. 2 stretches are compositionally biased toward polar residues: residues 2876-2885 (LTTAPPTWGI) and 2901-2918 (DTKSASLPTPGQSLNTIP). Residues 2919–2931 (DSDASTASSSLSK) are compositionally biased toward low complexity. Residues 2942–2968 (MTSTKAISASSFQSTGFTETPEGSASP) show a composition bias toward polar residues. Low complexity predominate over residues 3019–3035 (TGQAARSGSSSSPISLS). Residues 3041–3052 (SFLSPTASTSRK) are compositionally biased toward polar residues. Asn-3085 is a glycosylation site (N-linked (GlcNAc...) asparagine). Low complexity predominate over residues 3107–3116 (TAETQTLTFT). Composition is skewed to polar residues over residues 3117–3132 (PSETPTSLLPVSSPTE) and 3172–3181 (SQAAQGNSTW). Asn-3178 is a glycosylation site (N-linked (GlcNAc...) asparagine). Residues 3188 to 3200 (TGSSPAGTSPGSP) are compositionally biased toward low complexity. 2 stretches are compositionally biased toward polar residues: residues 3201–3214 (EMSTTLKIMSSKEP) and 3251–3261 (ALGSGSTSISH). Low complexity predominate over residues 3263 to 3274 (PTGTTSPTKSPT). Composition is skewed to polar residues over residues 3299-3342 (GTPG…TTGM) and 3360-3383 (VSLSTSSNILEDPVTSPNSVSSLT). 2 stretches are compositionally biased toward low complexity: residues 3424–3436 (SSTSSWSDQTSGS) and 3477–3491 (PSGGKTSSASSVTSP). A glycan (N-linked (GlcNAc...) asparagine) is linked at Asn-3501. The span at 3538-3555 (ISTTITTMGTNSISTTTP) shows a compositional bias: low complexity. Disordered stretches follow at residues 3538–3588 (ISTT…STAA), 3644–3672 (TPSSDASAVKTETSTSERTLSPSDTTAST), 3794–3829 (RSSGVTFSRPDPTSKKAEQTSTQLPTTTSAHPGQVP), 3843–3879 (AKTPDATFQRQGQTALTTEARATSDSWNEKEKSTPSA), 3914–3982 (LESG…SPVV), 4024–4056 (MDTSSTTQTSIISSPGSTAITKGPRTEITSSKR), 4094–4121 (AMQTSPPGATSLSAPTLDTSATASWTGT), and 4138–4166 (FSKGPEDTSQPSPPSVEETSSSSSLVPIH). Polar residues-rich tracts occupy residues 3812–3824 (QTSTQLPTTTSAH) and 3848–3868 (ATFQRQGQTALTTEARATSDS). Low complexity predominate over residues 3916–3927 (SGTTSSPSWKSS). Over residues 3946 to 3982 (PSTNTVETTGWVTSSEHASHSTIPAHSASSKLTSPVV) the composition is skewed to polar residues. A compositionally biased stretch (low complexity) spans 4026-4041 (TSSTTQTSIISSPGST). Polar residues predominate over residues 4095–4121 (MQTSPPGATSLSAPTLDTSATASWTGT). A compositionally biased stretch (low complexity) spans 4152–4164 (SVEETSSSSSLVP). Asn-4220, Asn-4498, Asn-4606, Asn-4613, and Asn-4624 each carry an N-linked (GlcNAc...) asparagine glycan. 3 disordered regions span residues 4728–4748 (VKDVSQTNPPFQDEASSPSSQ), 4845–4961 (HSTV…TRLS), and 5026–5066 (VSWT…KLSS). Polar residues predominate over residues 4856-4876 (KVTSPNVTTSTMEDTTISRSI). Asn-4861 is a glycosylation site (N-linked (GlcNAc...) asparagine). Low complexity-rich tracts occupy residues 4877 to 4914 (PKSSKTTRTETETTSSLTPKLRETSISQEITSSTETST) and 4924 to 4939 (TTEVSRTDVTSSSSTS). Composition is skewed to polar residues over residues 4944-4961 (DQSTVSLDISTETNTRLS) and 5026-5037 (VSWTSPPSVDKT). A compositionally biased stretch (low complexity) spans 5038 to 5047 (SSPSSFLSSP). The span at 5048-5059 (AMTTPSLISSTL) shows a compositional bias: polar residues. N-linked (GlcNAc...) asparagine glycosylation is found at Asn-5096, Asn-5131, and Asn-5228. Disordered regions lie at residues 5128–5149 (VKANNSGHESHSPALADSETPK), 5221–5249 (EVSSTGVNSSSKISTPDHDKSTVPPDTFT), and 5271–5303 (TQASPPESASHSTLPLDTSTTLSQGGTHSTVTQ). Over residues 5221-5234 (EVSSTGVNSSSKIS) the composition is skewed to polar residues. A compositionally biased stretch (low complexity) spans 5280 to 5293 (SHSTLPLDTSTTLS). The segment covering 5294–5303 (QGGTHSTVTQ) has biased composition (polar residues). Asn-5320 is a glycosylation site (N-linked (GlcNAc...) asparagine). Disordered stretches follow at residues 5328-5365 (PVEETSSVSSLMSSPAMTSPSPVSSTSPQSIPSSPLPV), 5381-5400 (GTTSPESVTSSPPNLSSITH), 5426-5507 (NVGT…TNTA), 5519-5538 (ASRTEISSSRTSISDLDRPT), 5624-5654 (PVEETSSGFSLMSPSMTSPSPVSSTSPESIP), 5675-5696 (LGTTSPEPVTSSPPNLSSPTQE), and 5727-5747 (ISGHESQSSVPADSHTSKATS). Low complexity-rich tracts occupy residues 5333–5365 (SSVSSLMSSPAMTSPSPVSSTSPQSIPSSPLPV) and 5381–5393 (GTTSPESVTSSPP). Asn-5394 is a glycosylation site (N-linked (GlcNAc...) asparagine). 2 stretches are compositionally biased toward polar residues: residues 5426 to 5441 (NVGTSGSGHKSQSSVL) and 5447 to 5485 (SKATPLMSTTSTLGDTSVSTSTPNISQTNQIQTEPTASL). The N-linked (GlcNAc...) asparagine glycan is linked to Asn-5470. Composition is skewed to low complexity over residues 5495 to 5504 (SEKTSSTTET), 5520 to 5532 (SRTEISSSRTSIS), 5633 to 5654 (SLMSPSMTSPSPVSSTSPESIP), and 5675 to 5688 (LGTTSPEPVTSSPP). Asn-5689 carries N-linked (GlcNAc...) asparagine glycosylation. Positions 5727–5737 (ISGHESQSSVP) are enriched in polar residues. A glycan (N-linked (GlcNAc...) asparagine) is linked at Asn-5863. 2 disordered regions span residues 5882 to 5931 (STAS…SSPV) and 6054 to 6078 (STSTPGSPETKNVDRDSTSPLTPEL). Polar residues predominate over residues 5903–5916 (TTTMSRSTKGVSWQ). The segment covering 5917–5928 (SPPSVEETSSPS) has biased composition (low complexity). The segment covering 6054–6063 (STSTPGSPET) has biased composition (polar residues). An N-linked (GlcNAc...) asparagine glycan is attached at Asn-6088. Disordered stretches follow at residues 6122-6149 (PASAQSTKSPDISPEASSSHSNSPPLTI), 6219-6251 (NSLSSQAPLLVTTSPSPVTSTLQEHSTSSLVSV), 6399-6425 (SRTELTSSSRTSIQGTEKPTMSPDTST), 6438-6459 (TKSEERTIATQTGPHRATSQGT), 6497-6545 (ISGT…TSLP), and 6682-6714 (TTGATETSRTEVASSRRTSIPGPDHSTESPDIS). 3 stretches are compositionally biased toward low complexity: residues 6134-6149 (SPEASSSHSNSPPLTI), 6226-6251 (PLLVTTSPSPVTSTLQEHSTSSLVSV), and 6399-6410 (SRTELTSSSRTS). Composition is skewed to polar residues over residues 6411-6425 (IQGTEKPTMSPDTST) and 6445-6459 (IATQTGPHRATSQGT). Residues 6500-6523 (TSPPSVEKTSSSSSLLSLPAITSP) show a composition bias toward low complexity. Composition is skewed to polar residues over residues 6530 to 6545 (LPESRPSSPVHLTSLP) and 6683 to 6699 (TGATETSRTEVASSRRT). A glycan (N-linked (GlcNAc...) asparagine) is linked at Asn-6732. Disordered regions lie at residues 6800 to 6822 (SFSSSLMPSPAMTSPPVSSTLPK), 6845 to 6865 (TLGTSPEPTTSSPPNLSSTSH), and 6886 to 6939 (TAAT…SETT). The segment covering 6848-6864 (TSPEPTTSSPPNLSSTS) has biased composition (low complexity). Asn-6859 carries an N-linked (GlcNAc...) asparagine glycan. Residues 6886-6905 (TAATNVETTSSGHGSQSSVL) show a composition bias toward polar residues. A compositionally biased stretch (low complexity) spans 6919–6938 (TTSTMGHTTVSTSMSVSSET). N-linked (GlcNAc...) asparagine glycosylation is present at Asn-6961. 14 disordered regions span residues 6981 to 7004 (AEVSRTEVTSSGRTSIPGPSQSTV), 7028 to 7107 (MTIP…ATTS), 7143 to 7208 (TSPE…TSKA), 7279 to 7302 (SRTEVTSSSRTSISGSAESTMLPE), 7320 to 7345 (ESSEMTIKTQTSPPGSTSESTFTLDT), 7360 to 7427 (QRLP…SLLT), 7437 to 7456 (LDASAEPETSSPPSLSSTSV), 7463 to 7503 (EVTT…ETTK), 7527 to 7553 (SNTRKIQSEPASSLTTRLRETSTSEET), 7577 to 7597 (TEAISFSRTSMSGPEQSTMSQ), 7726 to 7782 (ATTT…TTSS), 7825 to 7849 (LASSLTPGLRESSGSEGTSSGTKMS), 7908 to 7927 (HTSPLGATTQGTSTLDTSST), and 7970 to 8000 (PSFSLMSSPATTSPSPVSSTLPESISSSPLP). Residues 7028 to 7038 (MTIPTQTGPSG) are compositionally biased toward polar residues. Over residues 7039–7055 (STSQDTLTLDTSTTKSQ) the composition is skewed to low complexity. Over residues 7057–7075 (KTHSTLTQRFPHSEMTTLM) the composition is skewed to polar residues. Low complexity predominate over residues 7086–7105 (SSPSLENPSSLPSLLSLPAT). Polar residues predominate over residues 7166 to 7200 (GKDTTNTEAVHPSTNTAASNVEIPSSGHESPSSAL). The span at 7279–7298 (SRTEVTSSSRTSISGSAEST) shows a compositional bias: low complexity. Polar residues-rich tracts occupy residues 7322–7345 (SEMTIKTQTSPPGSTSESTFTLDT), 7360–7371 (QRLPHSEITTLV), and 7390–7402 (SPPSSQLSLSAMI). Composition is skewed to low complexity over residues 7403–7427 (SPSPVSSTLPASSHSSSASVTSLLT) and 7439–7455 (ASAEPETSSPPSLSSTS). A compositionally biased stretch (polar residues) spans 7474 to 7484 (FSNTAVTKVGT). Residues 7485–7494 (SSSGHESPSS) show a composition bias toward low complexity. The span at 7733 to 7749 (GTSTEPGTSSSSSLSTT) shows a compositional bias: low complexity. Basic and acidic residues predominate over residues 7750-7765 (SHERLTTYKDTAHTEA). The span at 7768-7782 (PSTNTGGTNVATTSS) shows a compositional bias: polar residues. Low complexity-rich tracts occupy residues 7835–7846 (ESSGSEGTSSGT), 7915–7927 (TTQGTSTLDTSST), and 7973–8000 (SLMSSPATTSPSPVSSTLPESISSSPLP). N-linked (GlcNAc...) asparagine glycans are attached at residues Asn-8029 and Asn-8055. Disordered stretches follow at residues 8042–8078 (EVTTDTEKTHPSSNRTVTDVGTSSSGHESTSFVLADS), 8111–8134 (IQTEPTSSLTLGLRKTSSSEGTSL), 8312–8331 (GISREPGTSSTSNLSSTSHE), 8342–8389 (TEDM…YTMG), 8411–8472 (TSSL…ISPD), 8604–8624 (MLRTSSEPETSSPPNLSSTSA), 8674–8741 (SPMA…TKVS), and 8775–8880 (TPLT…HSSP). Residues 8052–8078 (PSSNRTVTDVGTSSSGHESTSFVLADS) show a composition bias toward polar residues. The segment covering 8319-8328 (TSSTSNLSST) has biased composition (low complexity). Residue Asn-8324 is glycosylated (N-linked (GlcNAc...) asparagine). A compositionally biased stretch (polar residues) spans 8345–8389 (MQPSTHTAVTNVRTSISGHESQSSVLSDSETPKATSPMGTTYTMG). Residues 8607-8624 (TSSEPETSSPPNLSSTSA) show a composition bias toward low complexity. N-linked (GlcNAc...) asparagine glycosylation is found at Asn-8618 and Asn-8684. 2 stretches are compositionally biased toward polar residues: residues 8674–8740 (SPMA…TTKV) and 8781–8810 (GSAEMTITPKTGHSGASSQGTFTLDTSSRA). Residues 8850-8880 (TSPPSSLVSLSAVTSPSPLYSTPSESSHSSP) show a composition bias toward low complexity. Asn-8913 carries an N-linked (GlcNAc...) asparagine glycan. 2 disordered regions span residues 8995–9018 (ESTSTLTPTPRETSTSQEIHSATK) and 9147–9168 (SLSSPVMTSSSPVSSTLPDSIH). Asn-9202 carries N-linked (GlcNAc...) asparagine glycosylation. Residues 9294–9307 (SISEETSSATEKST) show a composition bias toward low complexity. Residues 9294–9460 (SISEETSSAT…TPSGSSHSSP (167 aa)) form a disordered region. Composition is skewed to polar residues over residues 9308 to 9357 (VLSS…STPL) and 9374 to 9412 (SGATSQGTFTLDSSSTASWPGTHSATTQRFPQSVVTTPM). Positions 9431–9460 (SPPSSLVSSSSVTSPSPLYSTPSGSSHSSP) are enriched in low complexity. A glycan (N-linked (GlcNAc...) asparagine) is linked at Asn-9493. 4 disordered regions span residues 9611–9635 (ATPEVSRTEVMPSSRTSIPGPAQST), 9726–9753 (SSSSLTSLPLTTSLSPVSSTLLDSSPSS), 9771–9791 (VLDTSSEPKTSSSPNLSSTSV), and 9869–9890 (TEPTFSLTPGFRETSTSEETTS). A compositionally biased stretch (polar residues) spans 9621-9635 (MPSSRTSIPGPAQST). Composition is skewed to low complexity over residues 9774-9790 (TSSEPKTSSSPNLSSTS) and 9881-9890 (ETSTSEETTS). A glycan (N-linked (GlcNAc...) asparagine) is linked at Asn-9785. N-linked (GlcNAc...) asparagine glycans are attached at residues Asn-10075 and Asn-10173. Disordered stretches follow at residues 10175–10218 (SLDT…PPAS) and 10445–10469 (TIRPVKGPQTSTSPASPKGLHTGGT). Positions 10178–10193 (TSSVTPTNTPSSPGST) are enriched in low complexity. Residues 10194–10212 (HLLQSSKTDFTSSAKTSSP) show a composition bias toward polar residues. The N-linked (GlcNAc...) asparagine glycan is linked to Asn-10510. Over residues 10544-10573 (SLGAETSTALPRTTPSVFNRESETTASLVS) the composition is skewed to polar residues. Disordered regions lie at residues 10544–10590 (SLGA…DVSS) and 10689–10719 (ETSSTIPRTIPNFSHHESDATPSIATSPGAE). A glycan (N-linked (GlcNAc...) asparagine) is linked at Asn-10700. A compositionally biased stretch (polar residues) spans 10708–10719 (ATPSIATSPGAE). N-linked (GlcNAc...) asparagine glycosylation is present at Asn-10749. The span at 10849–10860 (TTPSMTTSHGAE) shows a compositional bias: polar residues. Disordered regions lie at residues 10849 to 10872 (TTPSMTTSHGAESSSAVPTPTVST), 10898 to 10926 (LSPGEPETTPSMATSHGEEASSAIPTPTV), and 11003 to 11036 (LPTLTLSPGEPETTPSMATSHGAEASSTVPTVSP). A compositionally biased stretch (low complexity) spans 10861 to 10872 (SSSAVPTPTVST). Over residues 11003–11018 (LPTLTLSPGEPETTPS) the composition is skewed to low complexity. An N-linked (GlcNAc...) asparagine glycan is attached at Asn-11053. A disordered region spans residues 11072–11092 (SMATSHGAEASSAVPTPTVSP). N-linked (GlcNAc...) asparagine glycosylation is found at Asn-11224 and Asn-11263. 2 stretches are compositionally biased toward polar residues: residues 11269 to 11284 (HPAESSSTLPRTTSRF) and 11358 to 11381 (STTVPRTTPNYSHSEPDTTPSIAT). 6 disordered regions span residues 11269 to 11301 (HPAESSSTLPRTTSRFSHSELDTMPSTVTSPEA), 11358 to 11400 (STTV…SPDV), 11508 to 11537 (KFSHSKSDTTLPVAITSPGPEASSAVSTTT), 11583 to 11724 (ETST…TSPR), 11836 to 11861 (SPTASPGVSAKTAPLSTHPGTETSTM), and 11913 to 11937 (QTVTSWNTETSPSVTSVGPPEFSRT). Asn-11367 carries N-linked (GlcNAc...) asparagine glycosylation. 3 stretches are compositionally biased toward polar residues: residues 11583–11594 (ETSTTVSGTIPN), 11631–11651 (VTSQVTSSATDTSTAIPTLTP), and 11658–11672 (TTASSATHPGTQTGF). Asn-11594 is a glycosylation site (N-linked (GlcNAc...) asparagine). Low complexity predominate over residues 11700 to 11717 (PVSRTTSSFSHSSPDATP). Polar residues-rich tracts occupy residues 11849–11861 (PLSTHPGTETSTM) and 11913–11928 (QTVTSWNTETSPSVTS). A run of 12 repeats spans residues 12067 to 12223 (AATV…PSPT), 12224 to 12381 (TAGP…PTIM), 12382 to 12537 (AAGP…PSPA), 12538 to 12692 (TAGP…PSPT), 12693 to 12848 (TAGP…PSPT), 12849 to 13004 (SAGP…PSPT), 13005 to 13160 (TAVP…PSPT), 13161 to 13316 (TTGP…PGPT), 13317 to 13472 (ATGP…SGPM), 13473 to 13628 (TASP…PGPS), 13629 to 13784 (AASP…FGPS), and 13785 to 13939 (AASH…RYMA). The interval 12067 to 13939 (AATVPFMVPF…FTINNLRYMA (1873 aa)) is 12 X approximate tandem repeats. In terms of domain architecture, SEA 1 spans 12072–12193 (FMVPFTLNFT…NSLYVNGFTH (122 aa)). N-linked (GlcNAc...) asparagine glycosylation is found at Asn-12079, Asn-12100, and Asn-12116. Cys-12126 and Cys-12146 are oxidised to a cystine. A glycan (N-linked (GlcNAc...) asparagine) is linked at Asn-12168. The segment at 12196–12226 (SMPTTSTPGTSTVDVGTSGTPSSSPSPTTAG) is disordered. Residues 12228 to 12349 (LLMPFTLNFT…NSLYVNGFTH (122 aa)) enclose the SEA 2 domain. N-linked (GlcNAc...) asparagine glycosylation is found at Asn-12235 and Asn-12272. Residues Cys-12282 and Cys-12302 are joined by a disulfide bond. A disordered region spans residues 12353–12376 (VSTTSTPGTSTVDLRTSGTPSSLS). SEA domains follow at residues 12386–12507 (LLVP…GFTH), 12542–12663 (LLVL…GFTH), and 12697–12818 (LLVP…GFTH). 3 N-linked (GlcNAc...) asparagine glycosylation sites follow: Asn-12393, Asn-12414, and Asn-12430. Cysteines 12440 and 12460 form a disulfide. 3 N-linked (GlcNAc...) asparagine glycosylation sites follow: Asn-12549, Asn-12570, and Asn-12586. A disulfide bridge connects residues Cys-12596 and Cys-12616. Asn-12704, Asn-12725, and Asn-12741 each carry an N-linked (GlcNAc...) asparagine glycan. Cys-12751 and Cys-12771 are disulfide-bonded. A compositionally biased stretch (polar residues) spans 12819-12834 (QTSAPNTSTPGTSTVD). The tract at residues 12819–12849 (QTSAPNTSTPGTSTVDLGTSGTPSSLPSPTS) is disordered. N-linked (GlcNAc...) asparagine glycosylation occurs at Asn-12824. Residues 12835-12849 (LGTSGTPSSLPSPTS) are compositionally biased toward low complexity. An SEA 6 domain is found at 12853–12974 (LLVPFTLNFT…NSLYVNGFTH (122 aa)). N-linked (GlcNAc...) asparagine glycosylation is found at Asn-12860, Asn-12881, and Asn-12897. A disulfide bridge connects residues Cys-12907 and Cys-12927. Over residues 12978 to 12990 (VAPTSTPGTSTVD) the composition is skewed to polar residues. Residues 12978–13003 (VAPTSTPGTSTVDLGTSGTPSSLPSP) form a disordered region. Over residues 12991-13003 (LGTSGTPSSLPSP) the composition is skewed to low complexity. 2 SEA domains span residues 13009-13130 (LLVP…GFTH) and 13165-13286 (LLVP…GFTQ). N-linked (GlcNAc...) asparagine glycosylation is found at Asn-13016, Asn-13037, and Asn-13053. Cys-13063 and Cys-13083 are disulfide-bonded. N-linked (GlcNAc...) asparagine glycosylation is found at Asn-13172 and Asn-13193. Cysteines 13219 and 13239 form a disulfide. A compositionally biased stretch (polar residues) spans 13291-13313 (PTTSTPGTFTVQPETSETPSSLP). Residues 13291–13317 (PTTSTPGTFTVQPETSETPSSLPGPTA) form a disordered region. 2 consecutive SEA domains span residues 13321-13442 (VLLP…GFTH) and 13477-13598 (LLVL…GFTQ). N-linked (GlcNAc...) asparagine glycosylation is found at Asn-13328, Asn-13349, and Asn-13365. Cysteines 13375 and 13395 form a disulfide. N-linked (GlcNAc...) asparagine glycosylation is found at Asn-13484, Asn-13505, and Asn-13521. A disulfide bridge links Cys-13531 with Cys-13551. Over residues 13603-13621 (PTTSIPGTPTVDLGTSGTP) the composition is skewed to polar residues. The disordered stretch occupies residues 13603–13625 (PTTSIPGTPTVDLGTSGTPVSKP). 4 SEA domains span residues 13633–13754 (LLVL…GFTH), 13789–13909 (LLIL…GFTH), 13922–14043 (SEEP…GYNE), and 14073–14193 (HLKT…GYAP). N-linked (GlcNAc...) asparagine glycosylation is found at Asn-13640 and Asn-13661. The cysteines at positions 13687 and 13707 are disulfide-linked. N-linked (GlcNAc...) asparagine glycans are attached at residues Asn-13733, Asn-13744, Asn-13796, Asn-13816, Asn-13832, Asn-13929, and Asn-13950. Cys-13976 and Cys-13996 are disulfide-bonded. N-linked (GlcNAc...) asparagine glycans are attached at residues Asn-14080 and Asn-14100. A disulfide bridge links Cys-14126 with Cys-14146. Asn-14195, Asn-14212, Asn-14254, Asn-14287, Asn-14326, and Asn-14363 each carry an N-linked (GlcNAc...) asparagine glycan. 2 SEA domains span residues 14198–14309 (IRGE…EMES) and 14319–14438 (STQH…GYSP). A disulfide bridge connects residues Cys-14373 and Cys-14393. N-linked (GlcNAc...) asparagine glycosylation is found at Asn-14417 and Asn-14423. A helical transmembrane segment spans residues 14452 to 14472 (FWAVILIGLAGLLGVITCLIC). Over 14473 to 14507 (GVLVTTRRRKKEGEYNVQQQCPGYYQSHLDLEDLQ) the chain is Cytoplasmic.

In terms of assembly, binds to MSLN. Binding to MSLN mediates heterotypic cell adhesion. This may contribute to the metastasis of ovarian cancer to the peritoneum by initiating cell attachment to the mesothelial epithelium via binding to MSLN. In terms of processing, heavily O-glycosylated; expresses both type 1 and type 2 core glycans. Heavily N-glycosylated; expresses primarily high mannose and complex bisecting type N-linked glycans. Post-translationally, may be phosphorylated. Phosphorylation of the intracellular C-terminal domain may induce proteolytic cleavage and the liberation of the extracellular domain into the extracellular space. In terms of processing, may contain numerous disulfide bridges. Association of several molecules of the secreted form may occur through interchain disulfide bridges providing an extraordinarily large gel-like matrix in the extracellular space or in the lumen of secretory ducts. As to expression, expressed in corneal and conjunctival epithelia (at protein level). Overexpressed in ovarian carcinomas and ovarian low malignant potential (LMP) tumors as compared to the expression in normal ovarian tissue and ovarian adenomas.

The protein resides in the cell membrane. It localises to the secreted. It is found in the extracellular space. Its function is as follows. Thought to provide a protective, lubricating barrier against particles and infectious agents at mucosal surfaces. In Homo sapiens (Human), this protein is Mucin-16.